Reading from the N-terminus, the 199-residue chain is Charged multivesicular body protein 1B2 (199 aa).

Positions 15 to 47 (AKELNRNAKKCDKEEKAEKAKIKKAIQKGNTEV) form a coiled coil. Positions 132–156 (MEDTMSSTTTLTTPQNQVDMLLQEM) are interaction with IST1. Residues 167-199 (ELPQGQTGSVGASVASTEQDELSQRLARLRDQV) form a disordered region. Positions 170–183 (QGQTGSVGASVAST) are enriched in polar residues. Positions 174-199 (GSVGASVASTEQDELSQRLARLRDQV) are interaction with SPAST. The stretch at 177 to 199 (GASVASTEQDELSQRLARLRDQV) forms a coiled coil. Residues 180–196 (VASTEQDELSQRLARLR) are interaction with VPS4A, MITD1 and STAMBP. An interaction with VTA1 region spans residues 180-199 (VASTEQDELSQRLARLRDQV). Residues 183–199 (TEQDELSQRLARLRDQV) are interaction with VPS4B. The MIT-interacting motif signature appears at 186 to 196 (DELSQRLARLR).

It belongs to the SNF7 family. As to quaternary structure, probable peripherally associated component of the endosomal sorting required for transport complex III (ESCRT-III). ESCRT-III components are thought to multimerize to form a flat lattice on the perimeter membrane of the endosome. Several assembly forms of ESCRT-III may exist that interact and act sequentially. Interacts with CHMP1A. Interacts with VTA1; the interaction probably involves the open conformation of CHMP1B. Interacts with CHMP2A. Interacts with VPS4A; the interaction is direct. Interacts with VPS4B; the interaction is direct. Interacts with SPAST (via MIT domain); the interaction is direct. Interacts with IST1. Interacts with MITD1. Interacts with STAMBP.

It localises to the cytoplasm. The protein localises to the cytosol. It is found in the endosome. Its subcellular location is the late endosome membrane. In terms of biological role, probable peripherally associated component of the endosomal sorting required for transport complex III (ESCRT-III) which is involved in multivesicular bodies (MVBs) formation and sorting of endosomal cargo proteins into MVBs. MVBs contain intraluminal vesicles (ILVs) that are generated by invagination and scission from the limiting membrane of the endosome and mostly are delivered to lysosomes enabling degradation of membrane proteins, such as stimulated growth factor receptors, lysosomal enzymes and lipids. The MVB pathway appears to require the sequential function of ESCRT-O, -I,-II and -III complexes. ESCRT-III proteins mostly dissociate from the invaginating membrane before the ILV is released. The ESCRT machinery also functions in topologically equivalent membrane fission events, such as the terminal stages of cytokinesis. ESCRT-III proteins are believed to mediate the necessary vesicle extrusion and/or membrane fission activities, possibly in conjunction with the AAA ATPase VPS4. Involved in cytokinesis. Involved in recruiting VPS4A and/or VPS4B and SPAST to the midbody of dividing cells. This Mus musculus (Mouse) protein is Charged multivesicular body protein 1B2.